A 330-amino-acid chain; its full sequence is Fructose-1,6-bisphosphatase class 1 (330 aa).

Positions 84, 103, 105, and 106 each coordinate Mg(2+). Substrate contacts are provided by residues 106–109 (DGSS), N196, and K262. A Mg(2+)-binding site is contributed by E268.

It belongs to the FBPase class 1 family. In terms of assembly, homotetramer. The cofactor is Mg(2+).

The protein localises to the cytoplasm. The catalysed reaction is beta-D-fructose 1,6-bisphosphate + H2O = beta-D-fructose 6-phosphate + phosphate. It functions in the pathway carbohydrate biosynthesis; gluconeogenesis. The polypeptide is Fructose-1,6-bisphosphatase class 1 (Shewanella putrefaciens (strain CN-32 / ATCC BAA-453)).